Reading from the N-terminus, the 291-residue chain is Bis(5'-nucleosyl)-tetraphosphatase, symmetrical (291 aa).

The protein belongs to the Ap4A hydrolase family.

It catalyses the reaction P(1),P(4)-bis(5'-adenosyl) tetraphosphate + H2O = 2 ADP + 2 H(+). Its function is as follows. Hydrolyzes diadenosine 5',5'''-P1,P4-tetraphosphate to yield ADP. In Coxiella burnetii (strain CbuG_Q212) (Coxiella burnetii (strain Q212)), this protein is Bis(5'-nucleosyl)-tetraphosphatase, symmetrical.